The chain runs to 470 residues: Carboxypeptidase Q (470 aa).

The N-terminal stretch at 1-18 is a signal peptide; the sequence is MRSLFFLFIVHLLALGSG. Positions 19–42 are excised as a propeptide; that stretch reads KAVFKNGVSQRTFREIKEEIANYE. N-linked (GlcNAc...) asparagine glycosylation is present at Asn-59. The Zn(2+) site is built by His-288 and Asp-300. The active-site Nucleophile is Glu-334. Glu-335 is a binding site for Zn(2+). The N-linked (GlcNAc...) asparagine glycan is linked to Asn-351. Zn(2+) is bound at residue Asp-362. Residue Asn-394 is glycosylated (N-linked (GlcNAc...) asparagine). His-432 contributes to the Zn(2+) binding site.

Belongs to the peptidase M28 family. Homodimer. The monomeric form is inactive while the homodimer is active. Post-translationally, N-glycosylated. The secreted form is modified by hybrid or complex type oligosaccharide chains.

It is found in the endoplasmic reticulum. It localises to the golgi apparatus. Its subcellular location is the lysosome. The protein resides in the secreted. Its function is as follows. Carboxypeptidase that may play an important role in the hydrolysis of circulating peptides. Catalyzes the hydrolysis of dipeptides with unsubstituted terminals into amino acids. May play a role in the liberation of thyroxine hormone from its thyroglobulin (Tg) precursor. The chain is Carboxypeptidase Q (Cpq) from Mus musculus (Mouse).